Reading from the N-terminus, the 455-residue chain is Bifunctional protein GlmU (455 aa).

The interval 1 to 226 (MALNVVILAA…AIEVEGANNR (226 aa)) is pyrophosphorylase. UDP-N-acetyl-alpha-D-glucosamine contacts are provided by residues 8 to 11 (LAAG), K22, Q73, 78 to 79 (GT), 100 to 102 (YGD), G137, E151, N166, and N224. D102 lines the Mg(2+) pocket. N224 provides a ligand contact to Mg(2+). The segment at 227–247 (VQLAQLERAYQARAAEKLMLE) is linker. The tract at residues 248–455 (GANLRDPARL…WARPVKKPKS (208 aa)) is N-acetyltransferase. 2 residues coordinate UDP-N-acetyl-alpha-D-glucosamine: R330 and K348. The active-site Proton acceptor is the H360. Residues Y363 and N374 each coordinate UDP-N-acetyl-alpha-D-glucosamine. Acetyl-CoA contacts are provided by residues A377, 383 to 384 (NY), S402, A420, and R437.

In the N-terminal section; belongs to the N-acetylglucosamine-1-phosphate uridyltransferase family. The protein in the C-terminal section; belongs to the transferase hexapeptide repeat family. In terms of assembly, homotrimer. It depends on Mg(2+) as a cofactor.

The protein resides in the cytoplasm. It catalyses the reaction alpha-D-glucosamine 1-phosphate + acetyl-CoA = N-acetyl-alpha-D-glucosamine 1-phosphate + CoA + H(+). It carries out the reaction N-acetyl-alpha-D-glucosamine 1-phosphate + UTP + H(+) = UDP-N-acetyl-alpha-D-glucosamine + diphosphate. Its pathway is nucleotide-sugar biosynthesis; UDP-N-acetyl-alpha-D-glucosamine biosynthesis; N-acetyl-alpha-D-glucosamine 1-phosphate from alpha-D-glucosamine 6-phosphate (route II): step 2/2. The protein operates within nucleotide-sugar biosynthesis; UDP-N-acetyl-alpha-D-glucosamine biosynthesis; UDP-N-acetyl-alpha-D-glucosamine from N-acetyl-alpha-D-glucosamine 1-phosphate: step 1/1. It functions in the pathway bacterial outer membrane biogenesis; LPS lipid A biosynthesis. Its function is as follows. Catalyzes the last two sequential reactions in the de novo biosynthetic pathway for UDP-N-acetylglucosamine (UDP-GlcNAc). The C-terminal domain catalyzes the transfer of acetyl group from acetyl coenzyme A to glucosamine-1-phosphate (GlcN-1-P) to produce N-acetylglucosamine-1-phosphate (GlcNAc-1-P), which is converted into UDP-GlcNAc by the transfer of uridine 5-monophosphate (from uridine 5-triphosphate), a reaction catalyzed by the N-terminal domain. The polypeptide is Bifunctional protein GlmU (Shewanella sediminis (strain HAW-EB3)).